The primary structure comprises 178 residues: Riboflavin kinase (178 aa).

Residues Thr39 and Asn41 each coordinate Mg(2+). The active-site Nucleophile is the Glu116.

This sequence belongs to the flavokinase family. The cofactor is Zn(2+). Mg(2+) serves as cofactor.

The enzyme catalyses riboflavin + ATP = FMN + ADP + H(+). Its pathway is cofactor biosynthesis; FMN biosynthesis; FMN from riboflavin (ATP route): step 1/1. Functionally, catalyzes the phosphorylation of riboflavin (vitamin B2) to form flavin mononucleotide (FMN) coenzyme. The polypeptide is Riboflavin kinase (FMN1) (Scheffersomyces stipitis (strain ATCC 58785 / CBS 6054 / NBRC 10063 / NRRL Y-11545) (Yeast)).